The following is a 230-amino-acid chain: Flagellar L-ring protein (230 aa).

An N-terminal signal peptide occupies residues 1 to 16 (MYLVFGIIFTSVIVTS). Cys17 carries N-palmitoyl cysteine lipidation. Residue Cys17 is the site of S-diacylglycerol cysteine attachment.

This sequence belongs to the FlgH family. In terms of assembly, the basal body constitutes a major portion of the flagellar organelle and consists of four rings (L,P,S, and M) mounted on a central rod.

It is found in the cell outer membrane. The protein resides in the bacterial flagellum basal body. Assembles around the rod to form the L-ring and probably protects the motor/basal body from shearing forces during rotation. The protein is Flagellar L-ring protein of Bartonella bacilliformis (strain ATCC 35685 / KC583 / Herrer 020/F12,63).